A 449-amino-acid polypeptide reads, in one-letter code: Glutamyl-tRNA reductase (449 aa).

Substrate-binding positions include 58-61 (TCNR), Ser-121, 126-128 (ETQ), and Gln-132. The Nucleophile role is filled by Cys-59. 203–208 (GLGEMA) is an NADP(+) binding site.

The protein belongs to the glutamyl-tRNA reductase family. In terms of assembly, homodimer.

It carries out the reaction (S)-4-amino-5-oxopentanoate + tRNA(Glu) + NADP(+) = L-glutamyl-tRNA(Glu) + NADPH + H(+). It participates in porphyrin-containing compound metabolism; protoporphyrin-IX biosynthesis; 5-aminolevulinate from L-glutamyl-tRNA(Glu): step 1/2. In terms of biological role, catalyzes the NADPH-dependent reduction of glutamyl-tRNA(Glu) to glutamate 1-semialdehyde (GSA). This Helicobacter pylori (strain Shi470) protein is Glutamyl-tRNA reductase.